The chain runs to 697 residues: Elongation factor G (697 aa).

Positions 10–285 (ERTRNIGIMA…AVVDYLPSPL (276 aa)) constitute a tr-type G domain. Residues 19–26 (AHIDAGKT), 83–87 (DTPGH), and 137–140 (NKMD) each bind GTP.

This sequence belongs to the TRAFAC class translation factor GTPase superfamily. Classic translation factor GTPase family. EF-G/EF-2 subfamily.

It is found in the cytoplasm. Functionally, catalyzes the GTP-dependent ribosomal translocation step during translation elongation. During this step, the ribosome changes from the pre-translocational (PRE) to the post-translocational (POST) state as the newly formed A-site-bound peptidyl-tRNA and P-site-bound deacylated tRNA move to the P and E sites, respectively. Catalyzes the coordinated movement of the two tRNA molecules, the mRNA and conformational changes in the ribosome. The sequence is that of Elongation factor G from Pediococcus pentosaceus (strain ATCC 25745 / CCUG 21536 / LMG 10740 / 183-1w).